The primary structure comprises 434 residues: Glutamate-1-semialdehyde 2,1-aminomutase (434 aa).

Lysine 266 bears the N6-(pyridoxal phosphate)lysine mark.

This sequence belongs to the class-III pyridoxal-phosphate-dependent aminotransferase family. HemL subfamily. Homodimer. It depends on pyridoxal 5'-phosphate as a cofactor.

It localises to the cytoplasm. The enzyme catalyses (S)-4-amino-5-oxopentanoate = 5-aminolevulinate. Its pathway is porphyrin-containing compound metabolism; protoporphyrin-IX biosynthesis; 5-aminolevulinate from L-glutamyl-tRNA(Glu): step 2/2. This Psychrobacter sp. (strain PRwf-1) protein is Glutamate-1-semialdehyde 2,1-aminomutase.